The following is a 58-amino-acid chain: Potassium channel toxin alpha-KTx 16.6 (58 aa).

The first 22 residues, 1–22 (MKILSVLLIALIICSINICSEA), serve as a signal peptide directing secretion. Disulfide bonds link C29–C50, C35–C55, and C39–C57.

The protein belongs to the short scorpion toxin superfamily. Potassium channel inhibitor family. Alpha-KTx 16 subfamily. As to expression, expressed by the venom gland.

Its subcellular location is the secreted. In terms of biological role, inhibits potassium channel. This Buthus israelis (Israeli scorpion) protein is Potassium channel toxin alpha-KTx 16.6.